A 394-amino-acid chain; its full sequence is MKDYTYSVTEINEYIKDLIEGDPYLTNVSVYGEISGVRPRKGHIFFSLVEENARLECVIFGGDNMGIRLQEGRMALVEGSVSVYIPHGTYRFICSNVRYLDRVGMYQIKFETTLKKLLEEGLLSRPKKTVPRFPRKIGIITSRDSAALQDVIRTARERKAPIEIYVFHTSVQGDSAREELIKALRKANEYDLDLVMIVRGGGSKEDLWVFNEEDVIREILKLRHPVVTGIGHEIDRVIADFVADVSMHTPTGAAEYVIPDASEIHEDLDSFLEKLIASLSNRFDMEERRLETLYFRLRMIGRRKLELNEFKIERVKELAAKLRKKLMDCFEQDQEKLESLGRMLESLNPLRPLERGFVLVKKEGEIVKESSDLKRGDVVSLVFKDGTKKAQVIG.

Belongs to the XseA family. As to quaternary structure, heterooligomer composed of large and small subunits.

The protein resides in the cytoplasm. It catalyses the reaction Exonucleolytic cleavage in either 5'- to 3'- or 3'- to 5'-direction to yield nucleoside 5'-phosphates.. Functionally, bidirectionally degrades single-stranded DNA into large acid-insoluble oligonucleotides, which are then degraded further into small acid-soluble oligonucleotides. In Thermotoga petrophila (strain ATCC BAA-488 / DSM 13995 / JCM 10881 / RKU-1), this protein is Exodeoxyribonuclease 7 large subunit.